The sequence spans 367 residues: Peptide chain release factor 1 (367 aa).

Gln238 carries the N5-methylglutamine modification.

This sequence belongs to the prokaryotic/mitochondrial release factor family. Post-translationally, methylated by PrmC. Methylation increases the termination efficiency of RF1.

Its subcellular location is the cytoplasm. Peptide chain release factor 1 directs the termination of translation in response to the peptide chain termination codons UAG and UAA. In Dictyoglomus turgidum (strain DSM 6724 / Z-1310), this protein is Peptide chain release factor 1.